The chain runs to 75 residues: Cruzioseptin-8 (75 aa).

Positions 1–22 are cleaved as a signal peptide; sequence MAFLKKCLFLVLFLGLVSLSIC. Residues 23–43 constitute a propeptide that is removed on maturation; the sequence is EEEKREEENEEVQEDDDQSEE. The disordered stretch occupies residues 25 to 44; that stretch reads EKREEENEEVQEDDDQSEEK. Residues 30–41 are compositionally biased toward acidic residues; it reads ENEEVQEDDDQS. Q72 is subject to Glutamine amide. A propeptide spanning residues 74-75 is cleaved from the precursor; sequence EQ.

As to expression, expressed by the skin glands.

The protein localises to the secreted. Its function is as follows. Has antimicrobial activity. The protein is Cruzioseptin-8 of Cruziohyla calcarifer (Splendid leaf frog).